The primary structure comprises 383 residues: Spermidine/putrescine import ATP-binding protein PotA (383 aa).

The 235-residue stretch at 12–246 (IALRDISKVY…PSTPFVAGFI (235 aa)) folds into the ABC transporter domain. Position 48–55 (48–55 (GPSGCGKT)) interacts with ATP.

It belongs to the ABC transporter superfamily. Spermidine/putrescine importer (TC 3.A.1.11.1) family. In terms of assembly, the complex is composed of two ATP-binding proteins (PotA), two transmembrane proteins (PotB and PotC) and a solute-binding protein (PotD).

It is found in the cell membrane. It carries out the reaction ATP + H2O + polyamine-[polyamine-binding protein]Side 1 = ADP + phosphate + polyamineSide 2 + [polyamine-binding protein]Side 1.. Its function is as follows. Part of the ABC transporter complex PotABCD involved in spermidine/putrescine import. Responsible for energy coupling to the transport system. The chain is Spermidine/putrescine import ATP-binding protein PotA from Acidothermus cellulolyticus (strain ATCC 43068 / DSM 8971 / 11B).